We begin with the raw amino-acid sequence, 82 residues long: Small ribosomal subunit protein eS21y (82 aa).

Met-1 bears the N-acetylmethionine mark.

It belongs to the eukaryotic ribosomal protein eS21 family.

The protein is Small ribosomal subunit protein eS21y (RPS21C) of Arabidopsis thaliana (Mouse-ear cress).